A 245-amino-acid chain; its full sequence is MVTPVTWMDNPIEVYVNDSVWVPGPTDDRCPAKPEEEGMMINISIVYRYPPICLGRAPGCLMPAVQNWLVEVPTVSPNSRFTYHMVSGMSLRPRVNYLQDFSYQRSLKFRPKGKPCPKEIPKESKNTEVLVWEECVANSAVILQNNEFGTIIDWAPRGQFYHNCSGQTQSCPSAQVSPAVDSDLTESLDKHKHKKLQSFYPWEWGEKGISTPRPEIISPVSGPEHPELWRLWPDTTLEFGLEIKL.

The segment at 1–245 (MVTPVTWMDN…TLEFGLEIKL (245 aa)) is truncated surface protein.

It belongs to the beta type-B retroviral envelope protein family. HERV class-II K(HML-2) env subfamily. As to expression, expressed in lung, placenta, testis, peripheral blood lymphocytes, and teratocarcinoma cell lines.

The protein localises to the virion. Its function is as follows. Retroviral envelope proteins mediate receptor recognition and membrane fusion during early infection. Endogenous envelope proteins may have kept, lost or modified their original function during evolution. This Homo sapiens (Human) protein is Endogenous retrovirus group K member 5 Env polyprotein (ERVK-5).